The primary structure comprises 269 residues: Phosphatidate cytidylyltransferase (269 aa).

8 consecutive transmembrane segments (helical) span residues 13-33 (LAAI…TILI), 50-70 (LKLV…FLLP), 81-101 (ISKM…TVLV), 110-130 (VGFI…FIEI), 138-158 (LTYI…AYFV), 180-200 (FAGG…VAQL), 201-221 (PIPY…GQLG), and 247-267 (ILDR…LLAL).

The protein belongs to the CDS family.

The protein resides in the cell membrane. The enzyme catalyses a 1,2-diacyl-sn-glycero-3-phosphate + CTP + H(+) = a CDP-1,2-diacyl-sn-glycerol + diphosphate. It participates in phospholipid metabolism; CDP-diacylglycerol biosynthesis; CDP-diacylglycerol from sn-glycerol 3-phosphate: step 3/3. This chain is Phosphatidate cytidylyltransferase (cdsA), found in Bacillus subtilis (strain 168).